A 240-amino-acid chain; its full sequence is Coiled-coil domain-containing protein 152 (240 aa).

Residues 55–223 are a coiled coil; that stretch reads MQTKEVAMKQ…LEQRLSVSKD (169 aa).

This is Coiled-coil domain-containing protein 152 (CCDC152) from Bos taurus (Bovine).